Consider the following 215-residue polypeptide: Cytochrome b6 (215 aa).

The helical transmembrane segment at 32 to 52 threads the bilayer; it reads IFYCLGGITLTCFLVQVATGF. Cys35 provides a ligand contact to heme c. Residues His86 and His100 each contribute to the heme b site. 3 helical membrane-spanning segments follow: residues 90–110, 116–136, and 186–206; these read ASMMVLMMILHVFRVYLTGGF, LTWVTGVVLGVLTASFGVTGY, and LHTFVLPLLTAVFMLMHFPMI. 2 residues coordinate heme b: His187 and His202.

This sequence belongs to the cytochrome b family. PetB subfamily. As to quaternary structure, the 4 large subunits of the cytochrome b6-f complex are cytochrome b6, subunit IV (17 kDa polypeptide, PetD), cytochrome f and the Rieske protein, while the 4 small subunits are PetG, PetL, PetM and PetN. The complex functions as a dimer. Heme b serves as cofactor. The cofactor is heme c.

The protein resides in the plastid. The protein localises to the chloroplast thylakoid membrane. In terms of biological role, component of the cytochrome b6-f complex, which mediates electron transfer between photosystem II (PSII) and photosystem I (PSI), cyclic electron flow around PSI, and state transitions. The protein is Cytochrome b6 of Vitis vinifera (Grape).